We begin with the raw amino-acid sequence, 77 residues long: Exodeoxyribonuclease 7 small subunit (77 aa).

Belongs to the XseB family. Heterooligomer composed of large and small subunits.

It localises to the cytoplasm. It carries out the reaction Exonucleolytic cleavage in either 5'- to 3'- or 3'- to 5'-direction to yield nucleoside 5'-phosphates.. Its function is as follows. Bidirectionally degrades single-stranded DNA into large acid-insoluble oligonucleotides, which are then degraded further into small acid-soluble oligonucleotides. The sequence is that of Exodeoxyribonuclease 7 small subunit from Trichlorobacter lovleyi (strain ATCC BAA-1151 / DSM 17278 / SZ) (Geobacter lovleyi).